Reading from the N-terminus, the 217-residue chain is MOB kinase activator 3A (217 aa).

Cys-83, Cys-88, His-165, and His-170 together coordinate Zn(2+).

Belongs to the MOB1/phocein family.

May regulate the activity of kinases. The sequence is that of MOB kinase activator 3A (Mob3a) from Mus musculus (Mouse).